The chain runs to 274 residues: Diaminopimelate epimerase (274 aa).

Substrate contacts are provided by asparagine 11, glutamine 44, and asparagine 64. The active-site Proton donor is cysteine 73. Residues 74–75 (GN), asparagine 157, asparagine 190, and 208–209 (ER) each bind substrate. The active-site Proton acceptor is the cysteine 217. Residue 218–219 (GS) coordinates substrate.

Belongs to the diaminopimelate epimerase family. As to quaternary structure, homodimer.

It localises to the cytoplasm. The catalysed reaction is (2S,6S)-2,6-diaminopimelate = meso-2,6-diaminopimelate. It functions in the pathway amino-acid biosynthesis; L-lysine biosynthesis via DAP pathway; DL-2,6-diaminopimelate from LL-2,6-diaminopimelate: step 1/1. Functionally, catalyzes the stereoinversion of LL-2,6-diaminopimelate (L,L-DAP) to meso-diaminopimelate (meso-DAP), a precursor of L-lysine and an essential component of the bacterial peptidoglycan. This Haemophilus ducreyi (strain 35000HP / ATCC 700724) protein is Diaminopimelate epimerase.